The following is an 87-amino-acid chain: Putative sodium channel toxin Ts40 (87 aa).

The signal sequence occupies residues 1–19; the sequence is MTALFYLLFLTSVIIETHQ. 3 disulfide bridges follow: Cys-41–Cys-63, Cys-47–Cys-68, and Cys-51–Cys-70.

Belongs to the long (4 C-C) scorpion toxin superfamily. Sodium channel inhibitor family. Expressed by the venom gland.

The protein resides in the secreted. In terms of biological role, putative sodium channel toxin. In Tityus serrulatus (Brazilian scorpion), this protein is Putative sodium channel toxin Ts40.